The primary structure comprises 736 residues: Elongation factor 2 (736 aa).

A tr-type G domain is found at 18–234; it reads TRVRNIGIIA…VIDAYTASDK (217 aa). GTP is bound by residues 27–34, 93–97, and 147–150; these read AHVDHGKT, DTPGH, and NKVD. At His603 the chain carries Diphthamide.

Belongs to the TRAFAC class translation factor GTPase superfamily. Classic translation factor GTPase family. EF-G/EF-2 subfamily.

Its subcellular location is the cytoplasm. Functionally, catalyzes the GTP-dependent ribosomal translocation step during translation elongation. During this step, the ribosome changes from the pre-translocational (PRE) to the post-translocational (POST) state as the newly formed A-site-bound peptidyl-tRNA and P-site-bound deacylated tRNA move to the P and E sites, respectively. Catalyzes the coordinated movement of the two tRNA molecules, the mRNA and conformational changes in the ribosome. The polypeptide is Elongation factor 2 (Saccharolobus islandicus (strain Y.N.15.51 / Yellowstone #2) (Sulfolobus islandicus)).